Reading from the N-terminus, the 117-residue chain is Protein Turandot F (117 aa).

The N-terminal stretch at 1-22 (MKTVILFSFLLVLLGYLGAGHA) is a signal peptide.

It belongs to the Turandot family.

It is found in the secreted. A humoral factor that may play a role in stress tolerance. In Drosophila sechellia (Fruit fly), this protein is Protein Turandot F.